The sequence spans 369 residues: Chaperone protein DnaJ (369 aa).

The J domain maps to 5 to 70 (DYYEVLGVGR…NKRAAYDQFG (66 aa)). Residues 128–206 (GAETQIRIPR…CHGAGWVKRQ (79 aa)) form a CR-type zinc finger. Positions 141, 144, 158, 161, 180, 183, 194, and 197 each coordinate Zn(2+). CXXCXGXG motif repeat units follow at residues 141–148 (CDTCHGSG), 158–165 (CPTCNGHG), 180–187 (CSHCQGSG), and 194–201 (CGDCHGAG).

The protein belongs to the DnaJ family. Homodimer. The cofactor is Zn(2+).

The protein localises to the cytoplasm. Its function is as follows. Participates actively in the response to hyperosmotic and heat shock by preventing the aggregation of stress-denatured proteins and by disaggregating proteins, also in an autonomous, DnaK-independent fashion. Unfolded proteins bind initially to DnaJ; upon interaction with the DnaJ-bound protein, DnaK hydrolyzes its bound ATP, resulting in the formation of a stable complex. GrpE releases ADP from DnaK; ATP binding to DnaK triggers the release of the substrate protein, thus completing the reaction cycle. Several rounds of ATP-dependent interactions between DnaJ, DnaK and GrpE are required for fully efficient folding. Also involved, together with DnaK and GrpE, in the DNA replication of plasmids through activation of initiation proteins. The sequence is that of Chaperone protein DnaJ from Nitrosomonas europaea (strain ATCC 19718 / CIP 103999 / KCTC 2705 / NBRC 14298).